We begin with the raw amino-acid sequence, 246 residues long: UDP-N-acetyl-D-mannosaminuronic acid transferase (246 aa).

It belongs to the glycosyltransferase 26 family.

It carries out the reaction UDP-N-acetyl-alpha-D-mannosaminouronate + N-acetyl-alpha-D-glucosaminyl-di-trans,octa-cis-undecaprenyl diphosphate = beta-D-ManNAcA-(1-&gt;4)-alpha-D-GlcNAc-di-trans,octa-cis-undecaprenyl diphosphate + UDP + H(+). It participates in bacterial outer membrane biogenesis; enterobacterial common antigen biosynthesis. Functionally, catalyzes the synthesis of Und-PP-GlcNAc-ManNAcA (Lipid II), the second lipid-linked intermediate involved in enterobacterial common antigen (ECA) synthesis. The protein is UDP-N-acetyl-D-mannosaminuronic acid transferase of Escherichia coli O157:H7.